The following is a 732-amino-acid chain: Small conductance calcium-activated potassium channel protein 3 (732 aa).

Residues 1 to 11 (MDTSGHFHDSG) are compositionally biased toward basic and acidic residues. Disordered regions lie at residues 1 to 82 (MDTS…QQAP) and 103 to 162 (HSSP…ASPL). Positions 35–59 (QPPPPSAPPAVPQQPPGPLLQPQPP) are enriched in pro residues. Low complexity predominate over residues 60 to 82 (QLQQQQQQQQQQQQQQQQQQQAP). Positions 113 to 133 (NSANSTAILHPSSRQGSQLNL) are enriched in polar residues. Positions 139–148 (GHSPSSTATS) are enriched in low complexity. Ser168 carries the post-translational modification Phosphoserine. The span at 241–257 (THNHQHAGTTAGSTTFP) shows a compositional bias: polar residues. Residues 241–260 (THNHQHAGTTAGSTTFPKAN) are disordered. Residues 289 to 309 (LIFGMFGIVVMVIETELSWGL) form a helical membrane-spanning segment. The helical transmembrane segment at 316–336 (FSLALKCLISLSTIILLGLII) threads the bilayer. Residues 367–387 (ISLEMLVCAIHPIPGEYKFFW) traverse the membrane as a helical segment. The chain crosses the membrane as a helical span at residues 406–426 (IILSIPMFLRLYLIARVMLLH). Residues 455–475 (LMTICPGTVLLVFSISLWIIA) form a helical membrane-spanning segment. Positions 495–515 (FLGAMWLISITFLSIGYGDMV) form an intramembrane region, pore-forming. The chain crosses the membrane as a helical span at residues 524–544 (VCLLTGIMGAGCTALVVAVVA). The calmodulin-binding stretch occupies residues 562–638 (DTQLTKRIKN…LVDLSKMQNV (77 aa)). Positions 643–670 (ITELNDRSEDLEKQIGSLESKLEHLTAS) form a coiled coil. Positions 704 to 732 (GTSHAPPSDSPIGISSTSFPTPYTSSSSC) are disordered. A compositionally biased stretch (low complexity) spans 718–732 (SSTSFPTPYTSSSSC).

It belongs to the potassium channel KCNN family. KCa2.3/KCNN3 subfamily. As to quaternary structure, homodimer. Heteromultimer with KCNN2 or KCNN1; this modulates plasma membrane expression and consequently the small conductance calcium-activated potassium channel activity. The complex is composed of 4 channel subunits each of which binds to a calmodulin subunit which regulates the channel activity through calcium-binding. Interacts with CALM1.

It localises to the cell membrane. The protein localises to the cytoplasm. The protein resides in the myofibril. It is found in the sarcomere. Its subcellular location is the z line. It catalyses the reaction K(+)(in) = K(+)(out). Its activity is regulated as follows. Inhibited by bee venom neurotoxin apamin. In terms of biological role, small conductance calcium-activated potassium channel that mediates the voltage-independent transmembrane transfer of potassium across the cell membrane through a constitutive interaction with calmodulin which binds the intracellular calcium allowing its opening. The current is characterized by a voltage-independent activation, an intracellular calcium concentration increase-dependent activation and a single-channel conductance of 10 picosiemens. Also presents an inwardly rectifying current, thus reducing its already small outward conductance of potassium ions, which is particularly the case when the membrane potential displays positive values, above + 20 mV. Activation is followed by membrane hyperpolarization. Thought to regulate neuronal excitability by contributing to the slow component of synaptic afterhyperpolarization. The chain is Small conductance calcium-activated potassium channel protein 3 from Rattus norvegicus (Rat).